The chain runs to 251 residues: Triosephosphate isomerase (251 aa).

12 to 14 (NWK) is a binding site for substrate. Residue histidine 99 is the Electrophile of the active site. Residue glutamate 169 is the Proton acceptor of the active site. Substrate contacts are provided by residues glycine 175, serine 214, and 235 to 236 (GG).

The protein belongs to the triosephosphate isomerase family. As to quaternary structure, homodimer.

It is found in the cytoplasm. The enzyme catalyses D-glyceraldehyde 3-phosphate = dihydroxyacetone phosphate. It participates in carbohydrate biosynthesis; gluconeogenesis. It functions in the pathway carbohydrate degradation; glycolysis; D-glyceraldehyde 3-phosphate from glycerone phosphate: step 1/1. Involved in the gluconeogenesis. Catalyzes stereospecifically the conversion of dihydroxyacetone phosphate (DHAP) to D-glyceraldehyde-3-phosphate (G3P). The protein is Triosephosphate isomerase of Bradyrhizobium sp. (strain ORS 278).